The chain runs to 214 residues: Phosphatidylserine decarboxylase proenzyme (214 aa).

Residue Ser-182 is the Schiff-base intermediate with substrate; via pyruvic acid of the active site. Ser-182 is modified (pyruvic acid (Ser); by autocatalysis).

This sequence belongs to the phosphatidylserine decarboxylase family. PSD-A subfamily. Heterodimer of a large membrane-associated beta subunit and a small pyruvoyl-containing alpha subunit. The cofactor is pyruvate. Is synthesized initially as an inactive proenzyme. Formation of the active enzyme involves a self-maturation process in which the active site pyruvoyl group is generated from an internal serine residue via an autocatalytic post-translational modification. Two non-identical subunits are generated from the proenzyme in this reaction, and the pyruvate is formed at the N-terminus of the alpha chain, which is derived from the carboxyl end of the proenzyme. The post-translation cleavage follows an unusual pathway, termed non-hydrolytic serinolysis, in which the side chain hydroxyl group of the serine supplies its oxygen atom to form the C-terminus of the beta chain, while the remainder of the serine residue undergoes an oxidative deamination to produce ammonia and the pyruvoyl prosthetic group on the alpha chain.

It localises to the cell membrane. It carries out the reaction a 1,2-diacyl-sn-glycero-3-phospho-L-serine + H(+) = a 1,2-diacyl-sn-glycero-3-phosphoethanolamine + CO2. It participates in phospholipid metabolism; phosphatidylethanolamine biosynthesis; phosphatidylethanolamine from CDP-diacylglycerol: step 2/2. In terms of biological role, catalyzes the formation of phosphatidylethanolamine (PtdEtn) from phosphatidylserine (PtdSer). This Burkholderia cenocepacia (strain HI2424) protein is Phosphatidylserine decarboxylase proenzyme.